The primary structure comprises 395 residues: Putative pyridoxal phosphate-dependent acyltransferase (395 aa).

Pyridoxal 5'-phosphate is bound at residue 110-111 (GF). A substrate-binding site is contributed by His135. Pyridoxal 5'-phosphate contacts are provided by residues Ser185, 210 to 213 (DDAH), and 240 to 243 (TLSK). Position 243 is an N6-(pyridoxal phosphate)lysine (Lys243). Residue Thr357 coordinates substrate.

It belongs to the class-II pyridoxal-phosphate-dependent aminotransferase family. In terms of assembly, homodimer. The cofactor is pyridoxal 5'-phosphate.

This is Putative pyridoxal phosphate-dependent acyltransferase from Staphylococcus aureus (strain Mu50 / ATCC 700699).